Consider the following 128-residue polypeptide: NHP2-like protein 1 (128 aa).

N-acetylmethionine is present on M1. Residue T2 is modified to N-acetylthreonine; in NHP2-like protein 1, N-terminally processed. K21 carries the post-translational modification N6-acetyllysine. The segment at 36–48 is interaction with U4 snRNA and U4atac snRNA; the sequence is RKGANEATKTLNR. The interval 96–128 is important for U4 snRNA-binding; that stretch reads SRPVIACSVTIKEGSQLKQQIQSIQQSIERLLV. S122 carries the phosphoserine modification.

This sequence belongs to the eukaryotic ribosomal protein eL8 family. In terms of assembly, identified in the spliceosome B complex. Component of the U4/U6-U5 tri-snRNP complex composed of the U4, U6 and U5 snRNAs and at least PRPF3, PRPF4, PRPF6, PRPF8, PRPF31, SNRNP200, TXNL4A, WDR57, SNRNP40, DDX23, CD2BP2, PPIH, NHP2L1, EFTUD2, SART1 and USP39. Interacts with RAD17 and PRPF31. The complex formed by SNU13 and PRPF31 binds U4 snRNA. The complex formed by SNU13 and PRPF31 also binds U4atac snRNA, a characteristic component of specific, less abundant spliceosomal complexes. Part of the small subunit (SSU) processome, composed of more than 70 proteins and the RNA chaperone small nucleolar RNA (snoRNA) U3. Core component of box C/D small nucleolar ribonucleoprotein (snoRNP) particles; the core proteins SNU13, NOP56, NOP58 and FBL or FBLL1 assemble stepwise onto the snoRNA.

Its subcellular location is the nucleus. It localises to the nucleolus. Part of the small subunit (SSU) processome, first precursor of the small eukaryotic ribosomal subunit. During the assembly of the SSU processome in the nucleolus, many ribosome biogenesis factors, an RNA chaperone and ribosomal proteins associate with the nascent pre-rRNA and work in concert to generate RNA folding, modifications, rearrangements and cleavage as well as targeted degradation of pre-ribosomal RNA by the RNA exosome. Involved in pre-mRNA splicing as component of the spliceosome. Binds to the 5'-stem-loop of U4 snRNA and thereby contributes to spliceosome assembly. The protein undergoes a conformational change upon RNA-binding. Core component of box C/D small nucleolar ribonucleoprotein (snoRNP) complexes that function in methylation of multiple sites on ribosomal RNAs (rRNAs) and messenger RNAs (mRNAs). The chain is NHP2-like protein 1 from Bos taurus (Bovine).